The sequence spans 200 residues: TATA-box-binding protein 2 (200 aa).

Repeat copies occupy residues 25-101 (LQNI…ARII) and 115-192 (IQNI…YPVL).

Belongs to the TBP family. In terms of assembly, belongs to the TFIID complex together with the TBP-associated factors (TAFs). Binds DNA as monomer.

The protein localises to the nucleus. Functionally, general transcription factor that functions at the core of the DNA-binding multiprotein factor TFIID. Binding of TFIID to the TATA box is the initial transcriptional step of the pre-initiation complex (PIC), playing a role in the activation of eukaryotic genes transcribed by RNA polymerase II. This Zea mays (Maize) protein is TATA-box-binding protein 2 (TBP2).